Here is a 531-residue protein sequence, read N- to C-terminus: MGKMRVRFPTLVLVLGIVFLMAVSIGIAYGEKDVLKSHERPEEREQEEWQPRRQRPQSRREEREQEQEQGSPSYPRRQSGYERRQYHERSEQREEREQEQQQGSPSYSRRQRNPYHFNSQRFQTLYKNRNGKIRVLERFDQRTNRLENLQNYRIVEFQSKPNTLILPKHSDADYVLVVLNGRATITIVNPDRRQAYNLEYGDALRIPAGSTSYILNPDDNQKLRVVKLAIPINNPGYFYDFYPSSTKDQQSYFSGFSRNTLEATFNTRYEEIQRILLGNEDEQEYEEQRRGQEQSHQDEGVIVRVSREQIQELTKYAQSSSGKDKPSQSGPFNLRSNEPIYSNKYGNFYEITPDRNPQVQDLDISLTFTEINEGALLLPHYNSKAIFIVVVGEGNGKYELVGIRDQQRQQDEQEEEPEEVRRYSARLSEGDIFVIPAGYPISVNASSNLRLLGFGINAYENQRNFLAGSEDNVIRQLDREVKELTFPGSAEDIERLIKNQQQSYFANALPQQQQQSEKEGRRGRRGPISSI.

The signal sequence occupies residues 1–30 (MGKMRVRFPTLVLVLGIVFLMAVSIGIAYG). The propeptide occupies 31-108 (EKDVLKSHER…EQQQGSPSYS (78 aa)). Composition is skewed to basic and acidic residues over residues 37–51 (SHER…EWQP) and 79–99 (SGYE…REQE). 3 disordered regions span residues 37 to 124 (SHER…RFQT), 283 to 302 (QEYE…EGVI), and 314 to 337 (TKYA…LRSN). The Cupin type-1 1 domain occupies 115 to 273 (YHFNSQRFQT…TFNTRYEEIQ (159 aa)). Positions 286 to 302 (EEQRRGQEQSHQDEGVI) are enriched in basic and acidic residues. Polar residues predominate over residues 316–337 (YAQSSSGKDKPSQSGPFNLRSN). Residues 332–494 (FNLRSNEPIY…TFPGSAEDIE (163 aa)) enclose the Cupin type-1 2 domain. A glycan (N-linked (GlcNAc...) asparagine) is linked at Asn444. Residues 508–531 (ALPQQQQQSEKEGRRGRRGPISSI) are disordered.

The protein belongs to the 7S seed storage protein family.

Its function is as follows. Seed storage protein. Accumulates during seed development and is hydrolyzed after germination to provide a carbon and nitrogen source for the developing seedling. Has a lectin-like activity. The chain is Conglutin beta 1 from Lupinus albus (White lupine).